Consider the following 219-residue polypeptide: 16S rRNA (adenine(1408)-N(1))-methyltransferase (219 aa).

S-adenosyl-L-methionine-binding positions include glycine 32, asparagine 38, aspartate 55, 87 to 88 (AE), 104 to 109 (LFPWGT), and 195 to 197 (SLW).

This sequence belongs to the methyltransferase superfamily. Kanamycin-apramycin resistance family.

It carries out the reaction adenosine(1408) in 16S rRNA + S-adenosyl-L-methionine = N(1)-methyladenosine(1408) in 16S rRNA + S-adenosyl-L-homocysteine + H(+). Specifically methylates the N(1) position of adenine 1408 in 16S rRNA. Confers resistance to various aminoglycosides, including kanamycin, neomycin, apramycin, ribostamycin and gentamicin. Methylates only fully assembled 30S subunits. This Escherichia coli protein is 16S rRNA (adenine(1408)-N(1))-methyltransferase (npmA).